Here is a 358-residue protein sequence, read N- to C-terminus: tRNA-specific 2-thiouridylase MnmA (358 aa).

ATP is bound by residues 10–17 (AMSGGVDS) and methionine 36. Cysteine 105 acts as the Nucleophile in catalysis. A disulfide bond links cysteine 105 and cysteine 202. Glycine 129 contributes to the ATP binding site. The interval 152 to 154 (KDQ) is interaction with tRNA. The active-site Cysteine persulfide intermediate is cysteine 202. The interval 308–309 (RY) is interaction with tRNA.

It belongs to the MnmA/TRMU family.

It localises to the cytoplasm. The enzyme catalyses S-sulfanyl-L-cysteinyl-[protein] + uridine(34) in tRNA + AH2 + ATP = 2-thiouridine(34) in tRNA + L-cysteinyl-[protein] + A + AMP + diphosphate + H(+). In terms of biological role, catalyzes the 2-thiolation of uridine at the wobble position (U34) of tRNA, leading to the formation of s(2)U34. The polypeptide is tRNA-specific 2-thiouridylase MnmA (Magnetococcus marinus (strain ATCC BAA-1437 / JCM 17883 / MC-1)).